The sequence spans 39 residues: MGTIVCQDCNEAIHYFEDEKVTTLYGTCCGQCQCPVDEE.

This is an uncharacterized protein from Bacillus subtilis (strain 168).